The chain runs to 143 residues: Hemoglobin subunit alpha-1 (143 aa).

Ser2 carries the N-acetylserine modification. The region spanning 2-143 (SLTEKDKAAV…VSLALAERYR (142 aa)) is the Globin domain. Residue His60 coordinates O2. His89 contacts heme b.

Belongs to the globin family. In terms of assembly, hb 1 is a heterotetramer of two alpha-1 and two beta chains. In terms of tissue distribution, red blood cells.

In terms of biological role, involved in oxygen transport from gills to the various peripheral tissues. The protein is Hemoglobin subunit alpha-1 (hba1) of Cottoperca gobio (Frogmouth).